We begin with the raw amino-acid sequence, 540 residues long: Arylsulfatase K (540 aa).

A signal peptide spans 1 to 22; the sequence is MLLLWVSVVAASALAAPAPGAD. The Ca(2+) site is built by aspartate 44 and cysteine 84. The active-site Nucleophile is cysteine 84. Position 84 is a 3-oxoalanine (Cys) (cysteine 84). Asparagine 112 carries an N-linked (GlcNAc...) asparagine glycan. Position 132 (lysine 132) interacts with substrate. Asparagine 197 carries an N-linked (GlcNAc...) asparagine glycan. Histidine 255 lines the substrate pocket. A glycan (N-linked (GlcNAc...) asparagine) is linked at asparagine 266. Aspartate 317 and histidine 318 together coordinate Ca(2+). N-linked (GlcNAc...) asparagine glycosylation is found at asparagine 379, asparagine 417, and asparagine 502.

It belongs to the sulfatase family. Requires Ca(2+) as cofactor. The conversion to 3-oxoalanine (also known as C-formylglycine, FGly), of a serine or cysteine residue in prokaryotes and of a cysteine residue in eukaryotes, is critical for catalytic activity. Post-translationally, the 75-kDa precursor undergoes proteolytic processing to yield a 23 kDa form. In terms of processing, N-glycosylated with both high mannose and complex type sugars.

The protein resides in the secreted. It is found in the lysosome. It catalyses the reaction an aryl sulfate + H2O = a phenol + sulfate + H(+). It carries out the reaction Hydrolysis of the 2-sulfate groups of the 2-O-sulfo-D-glucuronate residues of chondroitin sulfate, heparin and heparitin sulfate.. Its function is as follows. Catalyzes the hydrolysis of pseudosubstrates such as p-nitrocatechol sulfate and p-nitrophenyl sulfate. Catalyzes the hydrolysis of the 2-sulfate groups of the 2-O-sulfo-D-glucuronate residues of chondroitin sulfate, heparin and heparitin sulfate. Acts selectively on 2-sulfoglucuronate and lacks activity against 2-sulfoiduronate. In Bos taurus (Bovine), this protein is Arylsulfatase K (ARSK).